A 247-amino-acid chain; its full sequence is Translation initiation factor IF-3 (247 aa).

2 disordered regions span residues 1 to 20 (MIRE…TNRR) and 188 to 247 (LVRQ…PTAS). Residues 182 to 247 (AQKARELVRQ…AAEAQSPTAS (66 aa)) form a needed for vegetative and developmental functions, but not for viability region. The span at 207–217 (AGKSAAGASSG) shows a compositional bias: low complexity. The span at 218–232 (AEEKAEETAEEKKEA) shows a compositional bias: basic and acidic residues. Residues 233 to 247 (QAAPAAAEAQSPTAS) are compositionally biased toward low complexity.

This sequence belongs to the IF-3 family. As to quaternary structure, monomer.

Its subcellular location is the cytoplasm. Functionally, IF-3 binds to the 30S ribosomal subunit and shifts the equilibrium between 70S ribosomes and their 50S and 30S subunits in favor of the free subunits, thus enhancing the availability of 30S subunits on which protein synthesis initiation begins. The chain is Translation initiation factor IF-3 from Myxococcus xanthus.